Reading from the N-terminus, the 719-residue chain is DNA ligase (719 aa).

Residues 42 to 46 (DAAYD), 92 to 93 (SL), and Glu-126 each bind NAD(+). The active-site N6-AMP-lysine intermediate is the Lys-128. Residues Arg-149, Glu-185, Lys-301, and Lys-325 each coordinate NAD(+). Residues Cys-430, Cys-433, Cys-448, and Cys-454 each coordinate Zn(2+). A BRCT domain is found at 640–719 (ATGSPVEGKT…DDWFKLVGED (80 aa)).

This sequence belongs to the NAD-dependent DNA ligase family. LigA subfamily. It depends on Mg(2+) as a cofactor. Requires Mn(2+) as cofactor.

It carries out the reaction NAD(+) + (deoxyribonucleotide)n-3'-hydroxyl + 5'-phospho-(deoxyribonucleotide)m = (deoxyribonucleotide)n+m + AMP + beta-nicotinamide D-nucleotide.. In terms of biological role, DNA ligase that catalyzes the formation of phosphodiester linkages between 5'-phosphoryl and 3'-hydroxyl groups in double-stranded DNA using NAD as a coenzyme and as the energy source for the reaction. It is essential for DNA replication and repair of damaged DNA. In Brucella ovis (strain ATCC 25840 / 63/290 / NCTC 10512), this protein is DNA ligase.